Here is a 344-residue protein sequence, read N- to C-terminus: Protein-arginine kinase (344 aa).

The 231-residue stretch at 14 to 244 (IVLSSRIRLA…KQIIQQERLA (231 aa)) folds into the Phosphagen kinase C-terminal domain. ATP is bound by residues 17-21 (SSRIR), His-81, Arg-115, 166-170 (RASAM), and 197-202 (RGLYGE).

The protein belongs to the ATP:guanido phosphotransferase family.

It catalyses the reaction L-arginyl-[protein] + ATP = N(omega)-phospho-L-arginyl-[protein] + ADP + H(+). Catalyzes the specific phosphorylation of arginine residues in proteins. The chain is Protein-arginine kinase from Clostridium novyi (strain NT).